Here is a 640-residue protein sequence, read N- to C-terminus: Threonine--tRNA ligase (640 aa).

Residues 1–61 form the TGS domain; that stretch reads MPVVTLPDGS…DKDSHLAIIT (61 aa). Positions 242 to 533 are catalytic; sequence DHRRLGKQLD…LIENHAGNMP (292 aa). 3 residues coordinate Zn(2+): Cys-333, His-384, and His-510.

This sequence belongs to the class-II aminoacyl-tRNA synthetase family. As to quaternary structure, homodimer. Zn(2+) serves as cofactor.

It is found in the cytoplasm. It catalyses the reaction tRNA(Thr) + L-threonine + ATP = L-threonyl-tRNA(Thr) + AMP + diphosphate + H(+). Catalyzes the attachment of threonine to tRNA(Thr) in a two-step reaction: L-threonine is first activated by ATP to form Thr-AMP and then transferred to the acceptor end of tRNA(Thr). Also edits incorrectly charged L-seryl-tRNA(Thr). This chain is Threonine--tRNA ligase, found in Polynucleobacter asymbioticus (strain DSM 18221 / CIP 109841 / QLW-P1DMWA-1) (Polynucleobacter necessarius subsp. asymbioticus).